Consider the following 310-residue polypeptide: Malate dehydrogenase (310 aa).

NAD(+) contacts are provided by residues 7–13 (GAAGGIG) and Asp34. Residues Arg81 and Arg87 each contribute to the substrate site. Residues Asn94 and 117-119 (ITN) each bind NAD(+). Asn119 and Arg153 together coordinate substrate. The active-site Proton acceptor is the His177. Met227 contacts NAD(+).

Belongs to the LDH/MDH superfamily. MDH type 1 family. Homodimer.

It carries out the reaction (S)-malate + NAD(+) = oxaloacetate + NADH + H(+). Catalyzes the reversible oxidation of malate to oxaloacetate. In Pseudoalteromonas translucida (strain TAC 125), this protein is Malate dehydrogenase.